The following is a 341-amino-acid chain: Anthranilate phosphoribosyltransferase (341 aa).

5-phospho-alpha-D-ribose 1-diphosphate-binding positions include glycine 79, glycine 82–aspartate 83, threonine 87, asparagine 89–threonine 92, lysine 107–serine 115, and alanine 119. Anthranilate is bound at residue glycine 79. Serine 91 serves as a coordination point for Mg(2+). Residue asparagine 110 participates in anthranilate binding. Arginine 165 contributes to the anthranilate binding site. 2 residues coordinate Mg(2+): aspartate 224 and glutamate 225.

The protein belongs to the anthranilate phosphoribosyltransferase family. As to quaternary structure, homodimer. Mg(2+) is required as a cofactor.

It catalyses the reaction N-(5-phospho-beta-D-ribosyl)anthranilate + diphosphate = 5-phospho-alpha-D-ribose 1-diphosphate + anthranilate. It participates in amino-acid biosynthesis; L-tryptophan biosynthesis; L-tryptophan from chorismate: step 2/5. In terms of biological role, catalyzes the transfer of the phosphoribosyl group of 5-phosphorylribose-1-pyrophosphate (PRPP) to anthranilate to yield N-(5'-phosphoribosyl)-anthranilate (PRA). The sequence is that of Anthranilate phosphoribosyltransferase from Lacticaseibacillus casei (strain BL23) (Lactobacillus casei).